A 343-amino-acid chain; its full sequence is Dihydroorotase (343 aa).

The Zn(2+) site is built by histidine 13 and histidine 15. Residues 15-17 (HLR) and asparagine 41 each bind substrate. The Zn(2+) site is built by lysine 99, histidine 136, and histidine 174. Lysine 99 carries the N6-carboxylysine modification. Histidine 136 is a binding site for substrate. Position 219 (leucine 219) interacts with substrate. Aspartate 247 lines the Zn(2+) pocket. Residue aspartate 247 is part of the active site. Substrate-binding residues include histidine 251 and alanine 263.

Belongs to the metallo-dependent hydrolases superfamily. DHOase family. Class II DHOase subfamily. In terms of assembly, homodimer. The cofactor is Zn(2+).

The catalysed reaction is (S)-dihydroorotate + H2O = N-carbamoyl-L-aspartate + H(+). Its pathway is pyrimidine metabolism; UMP biosynthesis via de novo pathway; (S)-dihydroorotate from bicarbonate: step 3/3. Functionally, catalyzes the reversible cyclization of carbamoyl aspartate to dihydroorotate. The protein is Dihydroorotase of Shewanella sp. (strain ANA-3).